Here is a 449-residue protein sequence, read N- to C-terminus: Bifunctional protein GlmU (449 aa).

A pyrophosphorylase region spans residues 1 to 225; sequence MLSVAILAAG…NGELQGINNR (225 aa). Residues 7 to 10, lysine 21, glutamine 73, and 78 to 79 contribute to the UDP-N-acetyl-alpha-D-glucosamine site; these read LAAG and GT. Mg(2+) is bound at residue aspartate 103. Positions 140, 154, 169, and 223 each coordinate UDP-N-acetyl-alpha-D-glucosamine. A Mg(2+)-binding site is contributed by asparagine 223. A linker region spans residues 226 to 246; the sequence is IHLSECEECIQNSIKEKHMLN. Residues 247 to 449 form an N-acetyltransferase region; that stretch reads GVTFINKASC…NIENWKKKKS (203 aa). UDP-N-acetyl-alpha-D-glucosamine is bound by residues arginine 328 and lysine 346. Histidine 358 acts as the Proton acceptor in catalysis. UDP-N-acetyl-alpha-D-glucosamine is bound by residues tyrosine 361 and asparagine 372. The acetyl-CoA site is built by alanine 375, alanine 418, and arginine 435.

The protein in the N-terminal section; belongs to the N-acetylglucosamine-1-phosphate uridyltransferase family. In the C-terminal section; belongs to the transferase hexapeptide repeat family. As to quaternary structure, homotrimer. It depends on Mg(2+) as a cofactor.

Its subcellular location is the cytoplasm. It carries out the reaction alpha-D-glucosamine 1-phosphate + acetyl-CoA = N-acetyl-alpha-D-glucosamine 1-phosphate + CoA + H(+). The catalysed reaction is N-acetyl-alpha-D-glucosamine 1-phosphate + UTP + H(+) = UDP-N-acetyl-alpha-D-glucosamine + diphosphate. It functions in the pathway nucleotide-sugar biosynthesis; UDP-N-acetyl-alpha-D-glucosamine biosynthesis; N-acetyl-alpha-D-glucosamine 1-phosphate from alpha-D-glucosamine 6-phosphate (route II): step 2/2. It participates in nucleotide-sugar biosynthesis; UDP-N-acetyl-alpha-D-glucosamine biosynthesis; UDP-N-acetyl-alpha-D-glucosamine from N-acetyl-alpha-D-glucosamine 1-phosphate: step 1/1. Its pathway is bacterial outer membrane biogenesis; LPS lipid A biosynthesis. Its function is as follows. Catalyzes the last two sequential reactions in the de novo biosynthetic pathway for UDP-N-acetylglucosamine (UDP-GlcNAc). The C-terminal domain catalyzes the transfer of acetyl group from acetyl coenzyme A to glucosamine-1-phosphate (GlcN-1-P) to produce N-acetylglucosamine-1-phosphate (GlcNAc-1-P), which is converted into UDP-GlcNAc by the transfer of uridine 5-monophosphate (from uridine 5-triphosphate), a reaction catalyzed by the N-terminal domain. This chain is Bifunctional protein GlmU, found in Prochlorococcus marinus (strain AS9601).